The chain runs to 100 residues: Probable antitoxin MazE1 (100 aa).

The disordered stretch occupies residues 77–100 (PYESEAERSAARARRNARQQRSAQ).

As to quaternary structure, forms a complex with cognate toxin MazF1.

Probable antitoxin component of a type II toxin-antitoxin (TA) system. Labile antitoxin that binds to cognate MazF1 toxin and counteracts its endoribonuclease activity. This Mycobacterium bovis (strain ATCC BAA-935 / AF2122/97) protein is Probable antitoxin MazE1 (mazE1).